A 172-amino-acid polypeptide reads, in one-letter code: Centrin-2 (172 aa).

A compositionally biased stretch (polar residues) spans 1–14; it reads MASNFKKTTMASSA. The interval 1-31 is disordered; that stretch reads MASNFKKTTMASSAQRKRMSPKPELTEDQKQ. A2 carries the post-translational modification N-acetylalanine. Residues 2 to 25 are required for self-assembly; sequence ASNFKKTTMASSAQRKRMSPKPEL. The residue at position 20 (S20) is a Phosphoserine. K22 participates in a covalent cross-link: Glycyl lysine isopeptide (Lys-Gly) (interchain with G-Cter in SUMO2). T26 carries the phosphothreonine modification. EF-hand domains are found at residues 28 to 63, 64 to 99, 101 to 136, and 137 to 172; these read DQKQ…LGFE, PKKE…KMSE, DTKE…LGEN, and LTDE…TSLY. 5 residues coordinate Ca(2+): D41, D43, T45, T47, and E52. Positions 150, 152, 154, 156, and 161 each coordinate Ca(2+).

This sequence belongs to the centrin family. As to quaternary structure, monomer. Homooligomer. Interacts with CCP110, SFI1. Component of the XPC complex composed of XPC, RAD23B and CETN2. Component of the nuclear pore complex (NPC)-associated TREX-2 complex (transcription and export complex 2), composed of at least GANP, 2 copies of ENY2, PCID2, SEM1/DSS1, and either centrin CETN2 or centrin CETN3. The TREX-2 complex also associates with ALYREF/ALY and with the nucleoporin NUP153. Interacts with USP49. Forms a microtubule-associated complex with POC5, POC1B and FAM161A. Interacts with CCDC15. In terms of tissue distribution, ubiquitously expressed in all adult tissues tested, with strongest expression in brain, spleen, kidney, small intestine and ovary. Also expressed in the NIH 3T3 fibroblast cell line and peripheral blood lymphocytes.

The protein resides in the cytoplasm. It localises to the cytoskeleton. Its subcellular location is the microtubule organizing center. The protein localises to the centrosome. It is found in the centriole. The protein resides in the nucleus. It localises to the nucleus envelope. Its subcellular location is the nuclear pore complex. In terms of biological role, plays a fundamental role in microtubule organizing center structure and function. Required for centriole duplication and correct spindle formation. Has a role in regulating cytokinesis and genome stability via cooperation with CALM1 and CCP110. Its function is as follows. Involved in global genome nucleotide excision repair (GG-NER) by acting as component of the XPC complex. Cooperatively with Rad23b appears to stabilize Xpc. In vitro, stimulates DNA binding of the Xpc:Rad23b dimer. The XPC complex is proposed to represent the first factor bound at the sites of DNA damage and together with other core recognition factors, Xpa, RPA and the TFIIH complex, is part of the pre-incision (or initial recognition) complex. The XPC complex recognizes a wide spectrum of damaged DNA characterized by distortions of the DNA helix such as single-stranded loops, mismatched bubbles or single-stranded overhangs. The orientation of XPC complex binding appears to be crucial for inducing a productive NER. XPC complex is proposed to recognize and to interact with unpaired bases on the undamaged DNA strand which is followed by recruitment of the TFIIH complex and subsequent scanning for lesions in the opposite strand in a 5'-to-3' direction by the NER machinery. Cyclobutane pyrimidine dimers (CPDs) which are formed upon UV-induced DNA damage esacpe detection by the XPC complex due to a low degree of structural perurbation. Instead they are detected by the UV-DDB complex which in turn recruits and cooperates with the XPC complex in the respective DNA repair. Functionally, as a component of the TREX-2 complex, involved in the export of mRNAs to the cytoplasm through the nuclear pores. In Mus musculus (Mouse), this protein is Centrin-2 (Cetn2).